The following is a 369-amino-acid chain: F-box protein UCC1 (369 aa).

Positions 8–45 (LMDLPLEIHLSLLEYVPNELRAVNKYFYVLHNHSYKEK) constitute an F-box domain.

As to quaternary structure, component of the SCF(UCC1) E3 ubiquitin-protein ligase complex composed of CDC53, SKP1, RBX1 and UCC1. Interacts with CIT2. Monoubiquitinated by UBC4.

The protein operates within protein modification; protein ubiquitination. In terms of biological role, substrate recognition component of the SKP1-CUL1-F-box protein E3 ubiquitin-protein ligase complex SCF(UCC1) which mediates the ubiquitination and subsequent proteasomal degradation of target proteins. The SCF(UCC1) complex acts as a metabolic switch for the glyoxylate cycle and regulates the level of CIT2 protein to maintain citrate homeostasis. The protein is F-box protein UCC1 (UCC1) of Saccharomyces cerevisiae (strain ATCC 204508 / S288c) (Baker's yeast).